Here is a 182-residue protein sequence, read N- to C-terminus: Oligoribonuclease (182 aa).

The region spanning 8–171 (LIWIDLEMTG…DDIRESIKEL (164 aa)) is the Exonuclease domain. The active site involves Tyr-129.

The protein belongs to the oligoribonuclease family.

The protein resides in the cytoplasm. Functionally, 3'-to-5' exoribonuclease specific for small oligoribonucleotides. The protein is Oligoribonuclease of Haemophilus influenzae (strain 86-028NP).